The sequence spans 263 residues: Phosphatidylglycerol--prolipoprotein diacylglyceryl transferase (263 aa).

Helical transmembrane passes span 15–35, 52–72, 83–103, and 112–132; these read ISIH…VYLA, FILL…VIFQ, IFAI…GAAV, and AIAV…AQSI. Arginine 134 contacts a 1,2-diacyl-sn-glycero-3-phospho-(1'-sn-glycerol). Transmembrane regions (helical) follow at residues 170–190, 200–220, and 227–247; these read VPTF…ILGL, GDVT…IEGM, and FVGL…GAVL.

It belongs to the Lgt family.

It is found in the cell membrane. It carries out the reaction L-cysteinyl-[prolipoprotein] + a 1,2-diacyl-sn-glycero-3-phospho-(1'-sn-glycerol) = an S-1,2-diacyl-sn-glyceryl-L-cysteinyl-[prolipoprotein] + sn-glycerol 1-phosphate + H(+). Its pathway is protein modification; lipoprotein biosynthesis (diacylglyceryl transfer). Functionally, catalyzes the transfer of the diacylglyceryl group from phosphatidylglycerol to the sulfhydryl group of the N-terminal cysteine of a prolipoprotein, the first step in the formation of mature lipoproteins. The sequence is that of Phosphatidylglycerol--prolipoprotein diacylglyceryl transferase from Streptococcus thermophilus (strain ATCC BAA-491 / LMD-9).